The sequence spans 501 residues: Putative ribose/galactose/methyl galactoside import ATP-binding protein 1 (501 aa).

2 ABC transporter domains span residues 5–237 (VSLS…VGRQ) and 249–492 (VPGE…MTRS). 37–44 (GENGAGKS) is an ATP binding site.

It belongs to the ABC transporter superfamily. Carbohydrate importer 2 (CUT2) (TC 3.A.1.2) family.

It is found in the cell inner membrane. It catalyses the reaction D-ribose(out) + ATP + H2O = D-ribose(in) + ADP + phosphate + H(+). The enzyme catalyses D-galactose(out) + ATP + H2O = D-galactose(in) + ADP + phosphate + H(+). Its function is as follows. Part of an ABC transporter complex involved in carbohydrate import. Could be involved in ribose, galactose and/or methyl galactoside import. Responsible for energy coupling to the transport system. The protein is Putative ribose/galactose/methyl galactoside import ATP-binding protein 1 of Rhizobium meliloti (strain 1021) (Ensifer meliloti).